The following is a 336-amino-acid chain: Inositol 2-dehydrogenase (336 aa).

Belongs to the Gfo/Idh/MocA family. In terms of assembly, homotetramer.

It carries out the reaction myo-inositol + NAD(+) = scyllo-inosose + NADH + H(+). Its function is as follows. Involved in the oxidation of myo-inositol (MI) to 2-keto-myo-inositol (2KMI or 2-inosose). The polypeptide is Inositol 2-dehydrogenase (Pseudomonas fluorescens (strain ATCC BAA-477 / NRRL B-23932 / Pf-5)).